The primary structure comprises 105 residues: CRISPR-associated endoribonuclease Cas2 1 (105 aa).

Aspartate 20 serves as a coordination point for Mg(2+).

This sequence belongs to the CRISPR-associated endoribonuclease Cas2 protein family. As to quaternary structure, homodimer, forms a heterotetramer with a Cas1 homodimer. Mg(2+) serves as cofactor.

In terms of biological role, CRISPR (clustered regularly interspaced short palindromic repeat), is an adaptive immune system that provides protection against mobile genetic elements (viruses, transposable elements and conjugative plasmids). CRISPR clusters contain sequences complementary to antecedent mobile elements and target invading nucleic acids. CRISPR clusters are transcribed and processed into CRISPR RNA (crRNA). Functions as a ssRNA-specific endoribonuclease. Involved in the integration of spacer DNA into the CRISPR cassette. The polypeptide is CRISPR-associated endoribonuclease Cas2 1 (cas21) (Nitrosomonas europaea (strain ATCC 19718 / CIP 103999 / KCTC 2705 / NBRC 14298)).